Consider the following 123-residue polypeptide: Fluoride-specific ion channel FluC (123 aa).

Helical transmembrane passes span 7-27, 39-59, 68-88, and 101-121; these read MAIALGGAFGAVARFYISGLL, MVNSIASLILGYLYGLLFWGF, FFGTGFCGALSTFSTFSYETF, and LNILANVIITIALVFAGFMLA. Na(+) is bound by residues Gly75 and Ser78.

This sequence belongs to the fluoride channel Fluc/FEX (TC 1.A.43) family.

Its subcellular location is the cell membrane. The catalysed reaction is fluoride(in) = fluoride(out). With respect to regulation, na(+) is not transported, but it plays an essential structural role and its presence is essential for fluoride channel function. Its function is as follows. Fluoride-specific ion channel. Important for reducing fluoride concentration in the cell, thus reducing its toxicity. In Thermococcus kodakarensis (strain ATCC BAA-918 / JCM 12380 / KOD1) (Pyrococcus kodakaraensis (strain KOD1)), this protein is Fluoride-specific ion channel FluC.